Reading from the N-terminus, the 221-residue chain is GTP-binding nuclear protein Ran-3 (221 aa).

A Small GTPase Ran-type domain is found at 10-174 (DYPSFKLVIV…LYLARKLAGD (165 aa)). A GTP-binding site is contributed by 21-28 (DGGTGKTT). Positions 40 to 48 (KKYEPTIGV) are switch-I. Residues G71, 125 to 128 (NKVD), and 153 to 155 (SAK) contribute to the GTP site. The switch-II stretch occupies residues 71-87 (GQEKFGGLRDGYYIHGQ). The disordered stretch occupies residues 201–221 (EAELAAAASQPLPDDDDDTFE).

Belongs to the small GTPase superfamily. Ran family. As to quaternary structure, found in a nuclear export complex with RanGTP, exportin and pre-miRNA. Interacts with RanBP1a and RanBP1b. Interacts with KPNB1.

It localises to the nucleus. GTP-binding protein involved in nucleocytoplasmic transport. Required for the import of protein into the nucleus and also for RNA export. Involved in chromatin condensation and control of cell cycle. This Arabidopsis thaliana (Mouse-ear cress) protein is GTP-binding nuclear protein Ran-3 (RAN3).